The primary structure comprises 87 residues: Phosphoribosyl-ATP pyrophosphatase (87 aa).

This sequence belongs to the PRA-PH family.

The protein localises to the cytoplasm. It catalyses the reaction 1-(5-phospho-beta-D-ribosyl)-ATP + H2O = 1-(5-phospho-beta-D-ribosyl)-5'-AMP + diphosphate + H(+). The protein operates within amino-acid biosynthesis; L-histidine biosynthesis; L-histidine from 5-phospho-alpha-D-ribose 1-diphosphate: step 2/9. The chain is Phosphoribosyl-ATP pyrophosphatase from Bifidobacterium adolescentis (strain ATCC 15703 / DSM 20083 / NCTC 11814 / E194a).